Reading from the N-terminus, the 105-residue chain is Endogenous retrovirus group K member 6 Rec protein (105 aa).

Residues 1-49 (MNPSEMQRKAPPRRRRHRNRAPLTHKMNKMVTSEEQMKLPSTKKAEPPT) form a disordered region. Basic residues predominate over residues 10–20 (APPRRRRHRNR). The short motif at 13–20 (RRRRHRNR) is the Nuclear localization signal element. Residues 50-59 (WAQLKKLTQL) carry the Nuclear export signal motif.

As to quaternary structure, forms homodimers, homotrimers, and homotetramers via a C-terminal domain. Associates with XPO1 and with ZNF145. As to expression, expressed at higher level in placenta, expressed at lower level in several organs and cell lines.

The protein localises to the cytoplasm. It is found in the nucleus. The protein resides in the nucleolus. Its function is as follows. Retroviral replication requires the nuclear export and translation of unspliced, singly-spliced and multiply-spliced derivatives of the initial genomic transcript. Rec interacts with a highly structured RNA element (RcRE) present in the viral 3'LTR and recruits the cellular nuclear export machinery. This permits export to the cytoplasm of unspliced genomic or incompletely spliced subgenomic viral transcripts. This chain is Endogenous retrovirus group K member 6 Rec protein (ERVK-6), found in Homo sapiens (Human).